The sequence spans 507 residues: MKVLDLLTVLSASSLLSTFAAAESTATADSTTAASSTASCNPLKTTGCTPDTALATSFSEDFSSSSKWFTDLKHAGEIKYGSDGLSMTLAKRYDNPSLKSNFYIMYGKLEVILKAANGTGIVSSFYLQSDDLDEIDIEWVGGDNTQFQSNFFSKGDTTTYDRGEFHGVDTPTDKFHNYTLDWAMDKTTWYLDGESVRVLSNTSSEGYPQSPMYLMMGIWAGGDPDNAAGTIEWAGGETNYNDAPFTMYIEKVIVTDYSTGKKYTYGDQSGSWESIEADGGSIYGRYDQAQEDFAVLANGGSISSSSTSSSTVSSSASSTVSSSVSSTVSSSASSTVSSSVSSTVSSSSSVSSSSSTSPSSSTATSSKTLASSSVTTSSSISSFEKQSSSSSKKTVASSSTSESIISSTKTPATVSSTTRSTVAPTTQQSSVSSDSPVQDKGGVATSSNDVTSSTTQISSKYTSTIQSSSSEASSTNSVQISNGADLAQSLPREGKLFSVLVALLALL.

The first 22 residues, 1–22 (MKVLDLLTVLSASSLLSTFAAA), serve as a signal peptide directing secretion. The GH16 domain occupies 34 to 260 (ASSTASCNPL…KVIVTDYSTG (227 aa)). Cysteine 40 and cysteine 48 are oxidised to a cystine. N-linked (GlcNAc...) asparagine glycosylation occurs at asparagine 117. The Nucleophile role is filled by glutamate 134. The active-site Proton donor is glutamate 138. A chitin-binding site is contributed by glutamate 138. Asparagine 177 and asparagine 201 each carry an N-linked (GlcNAc...) asparagine glycan. Chitin is bound by residues tryptophan 219 and threonine 230. Disordered stretches follow at residues 329–368 (SSSA…SSKT) and 381–478 (SSFE…TNSV). 2 stretches are compositionally biased toward low complexity: residues 381 to 439 (SSFE…PVQD) and 451 to 477 (TSST…STNS). Asparagine 482 is lipidated: GPI-anchor amidated asparagine. Positions 483-507 (GADLAQSLPREGKLFSVLVALLALL) are cleaved as a propeptide — removed in mature form.

This sequence belongs to the glycosyl hydrolase 16 family. CRH1 subfamily. In terms of processing, the GPI-anchor is attached to the protein in the endoplasmic reticulum and serves to target the protein to the cell surface. There, the glucosamine-inositol phospholipid moiety is cleaved off and the GPI-modified mannoprotein is covalently attached via its lipidless GPI glycan remnant to the 1,6-beta-glucan of the outer cell wall layer.

Its subcellular location is the secreted. It localises to the cell wall. It is found in the membrane. It carries out the reaction Random endo-hydrolysis of N-acetyl-beta-D-glucosaminide (1-&gt;4)-beta-linkages in chitin and chitodextrins.. In terms of biological role, dual chitinase/transglycosylase that plays a role in cell wall architecture. Chitinase and transglycosylase activities are coupled. Required for the polysaccharide cross-linking at the septa and the cell wall. More specifically, transfers chitin to both beta(1-3)- and beta(1-6)glucan in the cell wall. The minimal number of intact hexopyranose units required in the molecule of the acceptor oligosaccharide is two and the effectivity of the acceptor increased with the increasing length of its oligosaccharide chain. The polypeptide is Congo red hypersensitive protein 1 (Saccharomyces cerevisiae (strain ATCC 204508 / S288c) (Baker's yeast)).